A 565-amino-acid chain; its full sequence is MNKIIILISLFLNFLFGYVVCLNENNQKSQNLIIPTYSIKLKSDGEYLVYSGNDTLSIAQASYTNEMMSIGWGYISITTNPKYNDSLQIEAAGYLEGYLSYEMIWQNWNNMMVNQNANNSFGNDIISWAKENILYMNQQIQLNQNDPYWINVNLVLQQLNGLTNGYSDANQNPDRQLSLMDFILLNMNVEIYDIMNSLKNNSSSFYQQPNNNSFDNNQHCSALIKLTDDLTELYTGHTTWSDYYQMVRMIKSYNFRFSKLVAAKSNTTMFSGYPGVLMSVDDFYMLDSKLVVLETTNGIKDNDSELFKLIKPQSVLTWIRIIVTNRIAHSGKSWCEIFEKENSGTYNNQWMIVDYNKFIKGVRVQDGTLYVFEQLPGYVEYADVTNILRTGYWPSFNVPYFETISNMSGFNYQSSSSDSSSSSGSIAYEQYPRSQIFRRDSNKVYSISDFQAFMRYNDFQNDPLAYGDPGNQISSRFDLITPQNNASAAGGIDSKVTSLELINQFLMIAQSGPTHDQEPPFSWSSENWKNKYPTIGQPDTFDFEWVTFSTTSFGSFPSASNEKNY.

The N-terminal stretch at Met-1–Cys-21 is a signal peptide. Residues Asn-53, Asn-84, Asn-118, Asn-200, Asn-201, Asn-211, Asn-266, Asn-302, Asn-406, and Asn-485 are each glycosylated (N-linked (GlcNAc...) asparagine).

It belongs to the phospholipase B-like family.

It is found in the secreted. Functionally, probable phospholipase. The polypeptide is Phospholipase B-like protein C (plbC) (Dictyostelium discoideum (Social amoeba)).